The chain runs to 132 residues: Myelin P2 protein (132 aa).

The residue at position 2 (Ser2) is an N-acetylserine. (9Z)-octadecenoate contacts are provided by residues Arg107 and Arg127–Tyr129. Hexadecanoate is bound by residues Arg107 and Arg127–Tyr129.

This sequence belongs to the calycin superfamily. Fatty-acid binding protein (FABP) family. Monomer.

It is found in the cytoplasm. Functionally, may play a role in lipid transport protein in Schwann cells. May bind cholesterol. The sequence is that of Myelin P2 protein (PMP2) from Oryctolagus cuniculus (Rabbit).